We begin with the raw amino-acid sequence, 310 residues long: Cytosolic Fe-S cluster assembly factor Nubp1 homolog (310 aa).

[4Fe-4S] cluster-binding residues include C8, C22, C25, and C31. Residue 62–69 (GKGGVGKS) coordinates ATP. [4Fe-4S] cluster-binding residues include C239 and C242.

Belongs to the Mrp/NBP35 ATP-binding proteins family. NUBP1/NBP35 subfamily. As to quaternary structure, heterotetramer of 2 Nubp1 and 2 Nubp2 chains. [4Fe-4S] cluster is required as a cofactor.

The protein localises to the cytoplasm. Its function is as follows. Component of the cytosolic iron-sulfur (Fe/S) protein assembly (CIA) machinery. Required for maturation of extramitochondrial Fe-S proteins. The Nubp1-Nubp2 heterotetramer forms a Fe-S scaffold complex, mediating the de novo assembly of an Fe-S cluster and its transfer to target apoproteins. The sequence is that of Cytosolic Fe-S cluster assembly factor Nubp1 homolog from Drosophila willistoni (Fruit fly).